The sequence spans 147 residues: Small ribosomal subunit protein eS10B (147 aa).

Residues 90–147 (THKRQVRPAAPRAGRPEPRERSSAADAGYRRAEKKDDGAAPGGFAPSFRGGFGRPVAA) are disordered. The span at 103–127 (GRPEPRERSSAADAGYRRAEKKDDG) shows a compositional bias: basic and acidic residues.

Belongs to the eukaryotic ribosomal protein eS10 family. As to quaternary structure, component of the small ribosomal subunit (SSU). Mature yeast ribosomes consist of a small (40S) and a large (60S) subunit. The 40S small subunit contains 1 molecule of ribosomal RNA (18S rRNA) and at least 33 different proteins. The large 60S subunit contains 3 rRNA molecules (25S, 5.8S and 5S rRNA) and at least 46 different proteins. eS10 interacts with GCN1 (via middle region); this interaction is direct and promotes GCN2 kinase activity.

The protein resides in the cytoplasm. Component of the ribosome, a large ribonucleoprotein complex responsible for the synthesis of proteins in the cell. The small ribosomal subunit (SSU) binds messenger RNAs (mRNAs) and translates the encoded message by selecting cognate aminoacyl-transfer RNA (tRNA) molecules. The large subunit (LSU) contains the ribosomal catalytic site termed the peptidyl transferase center (PTC), which catalyzes the formation of peptide bonds, thereby polymerizing the amino acids delivered by tRNAs into a polypeptide chain. The nascent polypeptides leave the ribosome through a tunnel in the LSU and interact with protein factors that function in enzymatic processing, targeting, and the membrane insertion of nascent chains at the exit of the ribosomal tunnel. eS10 plays a role as a positive regulator of the GCN2 kinase activity by stimulating GCN1-mediated GCN2 activation. The polypeptide is Small ribosomal subunit protein eS10B (rps1002) (Schizosaccharomyces pombe (strain 972 / ATCC 24843) (Fission yeast)).